Here is a 469-residue protein sequence, read N- to C-terminus: Argininosuccinate lyase (469 aa).

Belongs to the lyase 1 family. Argininosuccinate lyase subfamily.

Its subcellular location is the cytoplasm. It carries out the reaction 2-(N(omega)-L-arginino)succinate = fumarate + L-arginine. It participates in amino-acid biosynthesis; L-arginine biosynthesis; L-arginine from L-ornithine and carbamoyl phosphate: step 3/3. The polypeptide is Argininosuccinate lyase (Saccharophagus degradans (strain 2-40 / ATCC 43961 / DSM 17024)).